We begin with the raw amino-acid sequence, 69 residues long: Sec-independent protein translocase protein TatA (69 aa).

Residues 1–21 (MFGLGGQELVLILLIVLLLFG) traverse the membrane as a helical segment. Over residues 47–63 (EEEFNKSMDDNPKKEKA) the composition is skewed to basic and acidic residues. The segment at 47–69 (EEEFNKSMDDNPKKEKATTASKS) is disordered.

It belongs to the TatA/E family. In terms of assembly, forms a complex with TatC.

It is found in the cell inner membrane. Functionally, part of the twin-arginine translocation (Tat) system that transports large folded proteins containing a characteristic twin-arginine motif in their signal peptide across membranes. TatA could form the protein-conducting channel of the Tat system. The chain is Sec-independent protein translocase protein TatA from Chlorobium chlorochromatii (strain CaD3).